A 421-amino-acid polypeptide reads, in one-letter code: ATP-dependent RNA helicase RhlB (421 aa).

Positions 9-37 (QKFSDFALHPQVVEALEKKRFYNCTPIQA) match the Q motif motif. Residues 40–219 (LPLTLAGRDV…FEQMNNAEYV (180 aa)) form the Helicase ATP-binding domain. 53-60 (AQTGTGKT) is an ATP binding site. The DEAD box signature appears at 165-168 (DEAD). The region spanning 245-390 (RLLQTLIEEE…VSKYNPEALM (146 aa)) is the Helicase C-terminal domain. A disordered region spans residues 396-421 (PLRLTRSRPGNGPRRAGAPRNRRRSG). Low complexity predominate over residues 402–414 (SRPGNGPRRAGAP).

The protein belongs to the DEAD box helicase family. RhlB subfamily. Component of the RNA degradosome, which is a multiprotein complex involved in RNA processing and mRNA degradation.

The protein localises to the cytoplasm. It carries out the reaction ATP + H2O = ADP + phosphate + H(+). DEAD-box RNA helicase involved in RNA degradation. Has RNA-dependent ATPase activity and unwinds double-stranded RNA. This is ATP-dependent RNA helicase RhlB from Salmonella dublin (strain CT_02021853).